Consider the following 404-residue polypeptide: Inner membrane transport protein YdiM (404 aa).

The Periplasmic segment spans residues Met1–Tyr5. The chain crosses the membrane as a helical span at residues Phe6–Met26. Over Ser27–Gly43 the chain is Cytoplasmic. A helical transmembrane segment spans residues Val44–Leu64. Topologically, residues Leu65–Ala84 are periplasmic. The chain crosses the membrane as a helical span at residues Phe85–Ala105. The Cytoplasmic portion of the chain corresponds to Gly106–Asn132. The helical transmembrane segment at Ile133–Leu153 threads the bilayer. Topologically, residues Val154 to Glu157 are periplasmic. The chain crosses the membrane as a helical span at residues Leu158–Leu178. Residues Tyr179–Ser206 lie on the Cytoplasmic side of the membrane. A helical membrane pass occupies residues Ile207–Val227. Residues Ser228–Ser246 are Periplasmic-facing. The chain crosses the membrane as a helical span at residues Ile247–Leu267. At Ile268–Arg273 the chain is on the cytoplasmic side. Residues Pro274–Leu294 traverse the membrane as a helical segment. Topologically, residues His295–Pro296 are periplasmic. Residues Thr297 to Val317 traverse the membrane as a helical segment. Over Gln318–Thr336 the chain is Cytoplasmic. A helical membrane pass occupies residues Gly337–Leu357. Residues Ser358–Asp364 lie on the Periplasmic side of the membrane. A helical transmembrane segment spans residues Ile365–Leu385. Residues Arg386–Gly404 are Cytoplasmic-facing.

Belongs to the major facilitator superfamily.

It localises to the cell inner membrane. This is Inner membrane transport protein YdiM (ydiM) from Escherichia coli (strain K12).